Here is a 427-residue protein sequence, read N- to C-terminus: Serine--tRNA ligase 2 (427 aa).

The segment covering 35-53 (RRRSEAQAEVTRLRTELNR) has biased composition (basic and acidic residues). Residues 35–72 (RRRSEAQAEVTRLRTELNRTSRARGRSGPPSEEEKEAA) form a disordered region. 230–232 (TAE) serves as a coordination point for L-serine. 261–263 (RAE) serves as a coordination point for ATP. Glu-284 provides a ligand contact to L-serine. 348–351 (EISS) provides a ligand contact to ATP. Ser-383 provides a ligand contact to L-serine.

This sequence belongs to the class-II aminoacyl-tRNA synthetase family. Type-1 seryl-tRNA synthetase subfamily. Homodimer. The tRNA molecule binds across the dimer.

The protein resides in the cytoplasm. The enzyme catalyses tRNA(Ser) + L-serine + ATP = L-seryl-tRNA(Ser) + AMP + diphosphate + H(+). It catalyses the reaction tRNA(Sec) + L-serine + ATP = L-seryl-tRNA(Sec) + AMP + diphosphate + H(+). Its pathway is aminoacyl-tRNA biosynthesis; selenocysteinyl-tRNA(Sec) biosynthesis; L-seryl-tRNA(Sec) from L-serine and tRNA(Sec): step 1/1. Functionally, catalyzes the attachment of serine to tRNA(Ser). Is also able to aminoacylate tRNA(Sec) with serine, to form the misacylated tRNA L-seryl-tRNA(Sec), which will be further converted into selenocysteinyl-tRNA(Sec). This chain is Serine--tRNA ligase 2, found in Streptomyces avermitilis (strain ATCC 31267 / DSM 46492 / JCM 5070 / NBRC 14893 / NCIMB 12804 / NRRL 8165 / MA-4680).